We begin with the raw amino-acid sequence, 146 residues long: Hemoglobin subunit beta (146 aa).

Valine 1 is subject to N-acetylvaline. One can recognise a Globin domain in the interval 2–146 (HLTAEEKAAV…VATALAHKYH (145 aa)). Position 12 is a phosphothreonine (threonine 12). Serine 44 bears the Phosphoserine mark. Residue lysine 59 is modified to N6-acetyllysine. Histidine 63 lines the heme b pocket. Lysine 82 carries the N6-acetyllysine modification. Heme b is bound at residue histidine 92. Residue cysteine 93 is modified to S-nitrosocysteine. Lysine 144 carries the post-translational modification N6-acetyllysine.

It belongs to the globin family. As to quaternary structure, heterotetramer of two alpha chains and two beta chains. As to expression, red blood cells.

In terms of biological role, involved in oxygen transport from the lung to the various peripheral tissues. In Mustela lutreola (European mink), this protein is Hemoglobin subunit beta (HBB).